The chain runs to 459 residues: Putrescine aminotransferase (459 aa).

Residues glycine 150 to threonine 151 and glutamine 274 contribute to the pyridoxal 5'-phosphate site. An N6-(pyridoxal phosphate)lysine modification is found at lysine 300. Threonine 332 serves as a coordination point for pyridoxal 5'-phosphate.

The protein belongs to the class-III pyridoxal-phosphate-dependent aminotransferase family. Putrescine aminotransferase subfamily. It depends on pyridoxal 5'-phosphate as a cofactor.

The enzyme catalyses an alkane-alpha,omega-diamine + 2-oxoglutarate = an omega-aminoaldehyde + L-glutamate. It carries out the reaction putrescine + 2-oxoglutarate = 1-pyrroline + L-glutamate + H2O. It catalyses the reaction cadaverine + 2-oxoglutarate = 5-aminopentanal + L-glutamate. The protein operates within amine and polyamine degradation; putrescine degradation; 4-aminobutanal from putrescine (transaminase route): step 1/1. Its function is as follows. Catalyzes the aminotransferase reaction from putrescine to 2-oxoglutarate, leading to glutamate and 4-aminobutanal, which spontaneously cyclizes to form 1-pyrroline. This is the first step in one of two pathways for putrescine degradation, where putrescine is converted into 4-aminobutanoate (gamma-aminobutyrate or GABA) via 4-aminobutanal. Also functions as a cadaverine transaminase in a a L-lysine degradation pathway to succinate that proceeds via cadaverine, glutarate and L-2-hydroxyglutarate. The protein is Putrescine aminotransferase of Escherichia coli O9:H4 (strain HS).